Consider the following 70-residue polypeptide: Protein SlyX homolog (70 aa).

It belongs to the SlyX family.

This is Protein SlyX homolog from Shewanella sediminis (strain HAW-EB3).